Consider the following 505-residue polypeptide: Beta-agarase (505 aa).

Positions 1-23 are cleaved as a signal peptide; that stretch reads MLKVIPWLLVTSSLVAIPTYIHA. Glu200 serves as the catalytic Proton donor. The Nucleophile role is filled by Glu322.

The protein belongs to the glycosyl hydrolase 86 family.

The protein resides in the secreted. The catalysed reaction is Hydrolysis of (1-&gt;4)-beta-D-galactosidic linkages in agarose, giving the tetramer as the predominant product.. Functionally, hydrolase that cleaves agar at the (1-&gt;4) linkage, producing tetrameric saccharide molecules. Is specific for agar and agarose and does not digest alginate or carrageenan. The sequence is that of Beta-agarase from Pseudoalteromonas atlantica (Alteromonas atlantica).